Consider the following 365-residue polypeptide: Bifunctional chorismate mutase/prephenate dehydratase (365 aa).

Residues 1–96 (MSEADQLKAL…SCLALEQPLR (96 aa)) enclose the Chorismate mutase domain. Substrate contacts are provided by Arg11, Arg28, Lys39, and Glu57. Residues 97–272 (VAYLGPEGTF…NSTRFLIIGS (176 aa)) form the Prephenate dehydratase domain. Residues 284-361 (SIIVSMRNKP…VALKVLGSYP (78 aa)) form the ACT domain.

It localises to the cytoplasm. The enzyme catalyses chorismate = prephenate. It carries out the reaction prephenate + H(+) = 3-phenylpyruvate + CO2 + H2O. Its pathway is amino-acid biosynthesis; L-phenylalanine biosynthesis; phenylpyruvate from prephenate: step 1/1. It participates in metabolic intermediate biosynthesis; prephenate biosynthesis; prephenate from chorismate: step 1/1. In terms of biological role, catalyzes the Claisen rearrangement of chorismate to prephenate and the decarboxylation/dehydration of prephenate to phenylpyruvate. The protein is Bifunctional chorismate mutase/prephenate dehydratase of Stutzerimonas stutzeri (Pseudomonas stutzeri).